Consider the following 298-residue polypeptide: Isochorismatase domain-containing protein 1 (298 aa).

A Phosphotyrosine modification is found at tyrosine 160. Residue lysine 279 is modified to N6-succinyllysine.

It belongs to the isochorismatase family.

This Bos taurus (Bovine) protein is Isochorismatase domain-containing protein 1 (ISOC1).